The primary structure comprises 1264 residues: ATP-dependent helicase/nuclease subunit A (1264 aa).

Positions 12–482 constitute a UvrD-like helicase ATP-binding domain; the sequence is EQFTDSQWQA…IILAENFRSR (471 aa). 33-40 is a binding site for ATP; the sequence is ASAGSGKT. The UvrD-like helicase C-terminal domain maps to 520-808; sequence SEAADYSTEL…RVMTIHASKG (289 aa).

Belongs to the helicase family. AddA subfamily. In terms of assembly, heterodimer of AddA and AddB/RexB. It depends on Mg(2+) as a cofactor.

It carries out the reaction Couples ATP hydrolysis with the unwinding of duplex DNA by translocating in the 3'-5' direction.. The catalysed reaction is ATP + H2O = ADP + phosphate + H(+). Its function is as follows. The heterodimer acts as both an ATP-dependent DNA helicase and an ATP-dependent, dual-direction single-stranded exonuclease. Recognizes the chi site generating a DNA molecule suitable for the initiation of homologous recombination. The AddA nuclease domain is required for chi fragment generation; this subunit has the helicase and 3' -&gt; 5' nuclease activities. The sequence is that of ATP-dependent helicase/nuclease subunit A from Enterococcus faecalis (strain ATCC 700802 / V583).